The primary structure comprises 959 residues: Isoleucine--tRNA ligase (959 aa).

Residues 60–70 carry the 'HIGH' region motif; it reads PYANGSLHMGH. Glutamate 569 is a binding site for L-isoleucyl-5'-AMP. The 'KMSKS' region motif lies at 610-614; sequence KMSKS. ATP is bound at residue lysine 613. Residues cysteine 928, cysteine 931, cysteine 948, and cysteine 951 each coordinate Zn(2+).

Belongs to the class-I aminoacyl-tRNA synthetase family. IleS type 1 subfamily. Monomer. The cofactor is Zn(2+).

The protein resides in the cytoplasm. The catalysed reaction is tRNA(Ile) + L-isoleucine + ATP = L-isoleucyl-tRNA(Ile) + AMP + diphosphate. In terms of biological role, catalyzes the attachment of isoleucine to tRNA(Ile). As IleRS can inadvertently accommodate and process structurally similar amino acids such as valine, to avoid such errors it has two additional distinct tRNA(Ile)-dependent editing activities. One activity is designated as 'pretransfer' editing and involves the hydrolysis of activated Val-AMP. The other activity is designated 'posttransfer' editing and involves deacylation of mischarged Val-tRNA(Ile). This chain is Isoleucine--tRNA ligase, found in Crocosphaera subtropica (strain ATCC 51142 / BH68) (Cyanothece sp. (strain ATCC 51142)).